We begin with the raw amino-acid sequence, 336 residues long: GTP 3',8-cyclase (336 aa).

One can recognise a Radical SAM core domain in the interval Gly-17–Asp-238. A GTP-binding site is contributed by Arg-26. [4Fe-4S] cluster contacts are provided by Cys-33 and Cys-37. Tyr-39 is a binding site for S-adenosyl-L-methionine. Cys-40 is a binding site for [4Fe-4S] cluster. Position 75 (Arg-75) interacts with GTP. Gly-79 contributes to the S-adenosyl-L-methionine binding site. Thr-106 is a binding site for GTP. Ser-130 is an S-adenosyl-L-methionine binding site. Lys-167 contributes to the GTP binding site. Met-201 contacts S-adenosyl-L-methionine. Cys-264 and Cys-267 together coordinate [4Fe-4S] cluster. Arg-269–Arg-271 provides a ligand contact to GTP. Cys-281 contacts [4Fe-4S] cluster.

Belongs to the radical SAM superfamily. MoaA family. Monomer and homodimer. The cofactor is [4Fe-4S] cluster.

It catalyses the reaction GTP + AH2 + S-adenosyl-L-methionine = (8S)-3',8-cyclo-7,8-dihydroguanosine 5'-triphosphate + 5'-deoxyadenosine + L-methionine + A + H(+). It functions in the pathway cofactor biosynthesis; molybdopterin biosynthesis. Its function is as follows. Catalyzes the cyclization of GTP to (8S)-3',8-cyclo-7,8-dihydroguanosine 5'-triphosphate. The protein is GTP 3',8-cyclase of Tolumonas auensis (strain DSM 9187 / NBRC 110442 / TA 4).